The following is a 185-amino-acid chain: MKAVSIEAGERSKAKRVHGVNRGISVFDLVLRIVALVGTLASAVAMGTAGQALSFSTQIVNFEAQYDDIDAFKFFVVSNSITCVYLALSIPISIFHIIRSRAGKSRVLLIVLDAIMLVFLTSGASAAAAIVYLAHNGNTSTNWFSICQQYTDFCQRSAGSLIGSFGAMALMVLLIILSSIALSRR.

Residues Met1–Arg32 are Cytoplasmic-facing. The helical transmembrane segment at Ile33–Leu53 threads the bilayer. The Extracellular portion of the chain corresponds to Ser54–Lys73. The helical transmembrane segment at Phe74–Ile94 threads the bilayer. The Cytoplasmic portion of the chain corresponds to Phe95 to Arg106. Residues Val107–Ala127 form a helical membrane-spanning segment. The Extracellular portion of the chain corresponds to Ala128–Ser160. An N-linked (GlcNAc...) asparagine glycan is attached at Asn138. Residues Leu161–Ala181 form a helical membrane-spanning segment. At Leu182 to Arg185 the chain is on the cytoplasmic side.

It belongs to the Casparian strip membrane proteins (CASP) family. Homodimer and heterodimers.

It localises to the cell membrane. Its function is as follows. Regulates membrane-cell wall junctions and localized cell wall deposition. Required for establishment of the Casparian strip membrane domain (CSD) and the subsequent formation of Casparian strips, a cell wall modification of the root endodermis that determines an apoplastic barrier between the intraorganismal apoplasm and the extraorganismal apoplasm and prevents lateral diffusion. This chain is Casparian strip membrane protein 1, found in Solanum demissum (Wild potato).